The primary structure comprises 370 residues: Cytochrome b (370 aa).

The next 4 helical transmembrane spans lie at 25-45 (FGSM…FLAI), 69-90 (WIMQ…YTHI), 105-125 (WLSG…GYVL), and 170-190 (FFAL…IHIV). Positions 75 and 89 each coordinate heme b. Residues His174 and His188 each contribute to the heme b site. His193 contributes to the a ubiquinone binding site. A run of 4 helical transmembrane segments spans residues 218–238 (YKDM…MSFM), 280–300 (LGGT…PFTH), 312–332 (LTQI…WTAT), and 339–358 (FITI…IINP).

It belongs to the cytochrome b family. The cytochrome bc1 complex contains 3 respiratory subunits (MT-CYB, CYC1 and UQCRFS1), 2 core proteins (UQCRC1 and UQCRC2) and probably 6 low-molecular weight proteins. The cofactor is heme b.

Its subcellular location is the mitochondrion inner membrane. Its function is as follows. Component of the ubiquinol-cytochrome c reductase complex (complex III or cytochrome b-c1 complex) that is part of the mitochondrial respiratory chain. The b-c1 complex mediates electron transfer from ubiquinol to cytochrome c. Contributes to the generation of a proton gradient across the mitochondrial membrane that is then used for ATP synthesis. This is Cytochrome b (MT-CYB) from Micropechis ikaheca (New Guinean small-eyed snake).